We begin with the raw amino-acid sequence, 849 residues long: Leucine--tRNA ligase (849 aa).

A 'HIGH' region motif is present at residues P44–H54. Positions K620–S624 match the 'KMSKS' region motif. K623 contacts ATP.

It belongs to the class-I aminoacyl-tRNA synthetase family.

It localises to the cytoplasm. It carries out the reaction tRNA(Leu) + L-leucine + ATP = L-leucyl-tRNA(Leu) + AMP + diphosphate. This Sphingopyxis alaskensis (strain DSM 13593 / LMG 18877 / RB2256) (Sphingomonas alaskensis) protein is Leucine--tRNA ligase.